A 624-amino-acid chain; its full sequence is tRNA uridine 5-carboxymethylaminomethyl modification enzyme MnmG (624 aa).

FAD-binding positions include 13–18 (GAGHAG), Val-125, and Ser-180. 272–286 (GPRYCPSIEDKVVKF) lines the NAD(+) pocket. Residue Gln-369 participates in FAD binding.

The protein belongs to the MnmG family. As to quaternary structure, homodimer. Heterotetramer of two MnmE and two MnmG subunits. FAD serves as cofactor.

The protein resides in the cytoplasm. NAD-binding protein involved in the addition of a carboxymethylaminomethyl (cmnm) group at the wobble position (U34) of certain tRNAs, forming tRNA-cmnm(5)s(2)U34. The protein is tRNA uridine 5-carboxymethylaminomethyl modification enzyme MnmG of Thermodesulfovibrio yellowstonii (strain ATCC 51303 / DSM 11347 / YP87).